The chain runs to 261 residues: Indole-3-glycerol phosphate synthase (261 aa).

This sequence belongs to the TrpC family.

The catalysed reaction is 1-(2-carboxyphenylamino)-1-deoxy-D-ribulose 5-phosphate + H(+) = (1S,2R)-1-C-(indol-3-yl)glycerol 3-phosphate + CO2 + H2O. The protein operates within amino-acid biosynthesis; L-tryptophan biosynthesis; L-tryptophan from chorismate: step 4/5. The polypeptide is Indole-3-glycerol phosphate synthase (Alkaliphilus metalliredigens (strain QYMF)).